We begin with the raw amino-acid sequence, 534 residues long: MRLRGRGPRAAPSSSSGAGDARRLAPPGRNPFVHELRLSALQKAQVAFMTLTLFPIRLLFAAFMMLLAWPFALLASLGPPDKEPEQPLALWRKVVDFLLKAIMRTMWFAGGFHRVAVKGRQALPTEAAILTLAPHSSYFDAIPVTMTMSSIVMKAESRDIPIWGTLIRYIRPVFVSRSDQDSRRKTVEEIKRRAQSNGKWPQIMIFPEGTCTNRTCLITFKPGAFIPGVPVQPVVLRYPNKLDTITWTWQGPGALKILWLTLCQFQNQVEIEFLPVYCPSEEEKRNPALYASNVRRVMAKALGVSVTDYTFEDCQLALAEGQLRLPADTCLLEFARLVRGLGLKPENLEKDLDKYSESARMKRGEKIRLPEFAAYLEVPVSDALEDMFSLFDESGGGEIDLREYVVALSVVCRPSQTLATIQLAFKMYGSPEDGSIDEANLSCILKTALGVSELTVTDLFQAIDQEDKGRITFDDFCGFAEMYPDYAEDYLYPDQTHFDSCAQTPPAPTPNGFCIDFSPENSDFGRKNSCKKAD.

A disordered region spans residues methionine 1 to alanine 25. The Cytoplasmic segment spans residues methionine 1–arginine 57. Positions proline 8 to glycine 19 are enriched in low complexity. A helical; Signal-anchor for type II membrane protein membrane pass occupies residues leucine 58–glycine 78. Residues proline 79–aspartate 534 are Lumenal-facing. Positions histidine 135–aspartate 140 match the HXXXXD motif motif. EF-hand domains lie at proline 379–proline 414 and valine 451–tyrosine 486. Ca(2+) is bound by residues aspartate 392, serine 394, glutamate 398, and glutamate 403. The Di-lysine motif motif lies at lysine 531 to aspartate 534.

The protein belongs to the 1-acyl-sn-glycerol-3-phosphate acyltransferase family. As to expression, predominantly expressed in lung where it is enriched in alveolar type II cells. Expressed at lower levels in spleen and brain. Also detected in erythroleukemic cells and reticulocytes. Weakly or not expressed in other tissues.

The protein resides in the endoplasmic reticulum membrane. It localises to the golgi apparatus membrane. Its subcellular location is the cell membrane. The protein localises to the lipid droplet. It catalyses the reaction a 1-acyl-sn-glycero-3-phosphocholine + an acyl-CoA = a 1,2-diacyl-sn-glycero-3-phosphocholine + CoA. The enzyme catalyses a 1-O-alkyl-sn-glycero-3-phosphocholine + acetyl-CoA = a 1-O-alkyl-2-acetyl-sn-glycero-3-phosphocholine + CoA. It carries out the reaction a 1-acyl-sn-glycero-3-phosphate + an acyl-CoA = a 1,2-diacyl-sn-glycero-3-phosphate + CoA. The catalysed reaction is a 1-O-(1Z-alkenyl)-sn-glycero-3-phosphocholine + an acyl-CoA = a 1-O-(1Z-alkenyl)-2-acyl-sn-glycero-3-phosphocholine + CoA. It catalyses the reaction 1-acyl-sn-glycero-3-phospho-(1'-sn-glycerol) + an acyl-CoA = a 1,2-diacyl-sn-glycero-3-phospho-(1'-sn-glycerol) + CoA. The enzyme catalyses 1-hexadecanoyl-sn-glycero-3-phosphocholine + hexadecanoyl-CoA = 1,2-dihexadecanoyl-sn-glycero-3-phosphocholine + CoA. It carries out the reaction 1-O-hexadecyl-sn-glycero-3-phosphocholine + hexadecanoyl-CoA = 1-O-hexadecyl-2-hexadecanoyl-sn-glycero-3-phosphocholine + CoA. The catalysed reaction is a 1-O-(1Z-alkenyl)-sn-glycero-3-phosphocholine + hexadecanoyl-CoA = 1-O-(1Z)-alkenyl-2-hexadecanoyl-sn-glycero-3-phosphocholine + CoA. It catalyses the reaction 1-hexadecanoyl-sn-glycero-3-phospho-(1'-sn-glycerol) + hexadecanoyl-CoA = 1,2-dihexadecanoyl-sn-glycero-3-phospho-(1'-sn-glycerol) + CoA. The enzyme catalyses 1-dodecanoyl-sn-glycero-3-phosphocholine + hexadecanoyl-CoA = 1-dodecanoyl-2-hexadecanoyl-sn-glycero-3-phosphocholine + CoA. It carries out the reaction 1-tetradecanoyl-sn-glycero-3-phosphocholine + hexadecanoyl-CoA = 1-tetradecanoyl-2-hexadecanoyl-sn-glycero-3-phosphocholine + CoA. The catalysed reaction is 1-O-octadecyl-sn-glycero-3-phosphocholine + hexadecanoyl-CoA = 1-O-octadecyl-2-hexadecanoyl-sn-glycero-3-phosphocholine + CoA. It catalyses the reaction 1-octadecanoyl-sn-glycero-3-phosphocholine + hexadecanoyl-CoA = 1-octadecanoyl-2-hexadecanoyl-sn-glycero-3-phosphocholine + CoA. The enzyme catalyses 1-(9Z-octadecenoyl)-sn-glycero-3-phosphocholine + hexadecanoyl-CoA = 1-(9Z-octadecenoyl)-2-hexadecanoyl-sn-glycero-3-phosphocholine + CoA. It carries out the reaction 1-eicosanoyl-sn-glycero-3-phosphocholine + hexadecanoyl-CoA = 1-eicosanoyl-2-hexadecanoyl-sn-glycero-3-phosphocholine + CoA. The catalysed reaction is hexanoyl-CoA + 1-hexadecanoyl-sn-glycero-3-phosphocholine = 1-hexadecanoyl-2-hexanoyl-sn-glycero-3-phosphocholine + CoA. It catalyses the reaction octanoyl-CoA + 1-hexadecanoyl-sn-glycero-3-phosphocholine = 1-hexadecanoyl-2-octanoyl-sn-glycero-3-phosphocholine + CoA. The enzyme catalyses decanoyl-CoA + 1-hexadecanoyl-sn-glycero-3-phosphocholine = 1-hexadecanoyl-2-decanoyl-sn-glycero-3-phosphocholine + CoA. It carries out the reaction dodecanoyl-CoA + 1-hexadecanoyl-sn-glycero-3-phosphocholine = 1-hexadecanoyl-2-dodecanoyl-sn-glycero-3-phosphocholine + CoA. The catalysed reaction is tetradecanoyl-CoA + 1-hexadecanoyl-sn-glycero-3-phosphocholine = 1-hexadecanoyl-2-tetradecanoyl-sn-glycero-3-phosphocholine + CoA. It catalyses the reaction 1-hexadecanoyl-sn-glycero-3-phosphocholine + (9Z)-octadecenoyl-CoA = 1-hexadecanoyl-2-(9Z-octadecenoyl)-sn-glycero-3-phosphocholine + CoA. The enzyme catalyses (9Z,12Z)-octadecadienoyl-CoA + 1-hexadecanoyl-sn-glycero-3-phosphocholine = 1-hexadecanoyl-2-(9Z,12Z-octadecadienoyl)-sn-glycero-3-phosphocholine + CoA. It carries out the reaction (4Z,7Z,10Z,13Z,16Z,19Z)-docosahexaenoyl-CoA + 1-hexadecanoyl-sn-glycero-3-phosphocholine = 1-hexadecanoyl-2-(4Z,7Z,10Z,13Z,16Z,19Z-docosahexaenoyl)-sn-glycero-3-phosphocholine + CoA. The catalysed reaction is 1-hexadecanoyl-sn-glycero-3-phosphocholine + acetyl-CoA = 1-hexadecanoyl-2-acetyl-sn-glycero-3-phosphocholine + CoA. It catalyses the reaction eicosanoyl-CoA + 1-hexadecanoyl-sn-glycero-3-phosphocholine = 1-hexadecanoyl-2-eicosanoyl-sn-glycero-3-phosphocholine + CoA. The enzyme catalyses 1-O-hexadecyl-sn-glycero-3-phosphocholine + acetyl-CoA = 1-O-hexadecyl-2-acetyl-sn-glycero-3-phosphocholine + CoA. It carries out the reaction a 1-acyl-sn-glycero-3-phosphocholine + hexadecanoyl-CoA = 1-acyl-2-hexadecanoyl-sn-glycero-3-phosphocholine + CoA. The catalysed reaction is a 1-acyl-sn-glycero-3-phosphate + hexadecanoyl-CoA = 1-acyl-2-hexadecanoyl-sn-glycero-3-phosphate + CoA. It catalyses the reaction 1-acyl-sn-glycero-3-phospho-(1'-sn-glycerol) + hexadecanoyl-CoA = 1-acyl-2-hexadecanoyl-sn-glycero-3-phospho-(1'-sn-glycerol) + CoA. The protein operates within lipid metabolism; phospholipid metabolism. With respect to regulation, not activated by inflammatory stimulation. Inhibited by Cu(2+), Fe(2+), Ca(2+) and Mg(2+). Activity is not affected by Co(2+) or Mn(2+). Functionally, exhibits both acyltransferase and acetyltransferase activities. Activity is calcium-independent. Catalyzes the conversion of lysophosphatidylcholine (1-acyl-sn-glycero-3-phosphocholine or LPC) into phosphatidylcholine (1,2-diacyl-sn-glycero-3-phosphocholine or PC). Catalyzes the conversion 1-acyl-sn-glycerol-3-phosphate (lysophosphatidic acid or LPA) into 1,2-diacyl-sn-glycerol-3-phosphate (phosphatidic acid or PA) by incorporating an acyl moiety at the sn-2 position of the glycerol backbone. Displays a clear preference for saturated fatty acyl-CoAs, and 1-myristoyl or 1-palmitoyl LPC as acyl donors and acceptors, respectively. Involved in platelet-activating factor (PAF) biosynthesis by catalyzing the conversion of the PAF precursor, 1-O-alkyl-sn-glycero-3-phosphocholine (lyso-PAF) into 1-O-alkyl-2-acetyl-sn-glycero-3-phosphocholine (PAF). May synthesize phosphatidylcholine in pulmonary surfactant, thereby playing a pivotal role in respiratory physiology. Involved in the regulation of lipid droplet number and size. This chain is Lysophosphatidylcholine acyltransferase 1 (Lpcat1), found in Mus musculus (Mouse).